The following is an 81-amino-acid chain: RNA-binding protein Hfq (81 aa).

Positions 10-69 (DPFLNTLRREHVPVSIYLVNGIKLQGQIESFDQYVVLLRNTVTQMVYKHAISTIVPGRAV) constitute a Sm domain.

It belongs to the Hfq family. In terms of assembly, homohexamer.

Its function is as follows. RNA chaperone that binds small regulatory RNA (sRNAs) and mRNAs to facilitate mRNA translational regulation in response to envelope stress, environmental stress and changes in metabolite concentrations. Also binds with high specificity to tRNAs. The polypeptide is RNA-binding protein Hfq (Variovorax paradoxus (strain S110)).